Here is a 190-residue protein sequence, read N- to C-terminus: Peptidyl-prolyl cis-trans isomerase FKBP20-1 (190 aa).

The residue at position 2 (Gly-2) is an N-acetylglycine. Positions Leu-32–Arg-121 constitute a PPIase FKBP-type domain. The span at Ala-149–Lys-163 shows a compositional bias: basic and acidic residues. The disordered stretch occupies residues Ala-149–Lys-190. Positions Gly-179–Lys-190 are enriched in basic residues.

This sequence belongs to the FKBP-type PPIase family.

It catalyses the reaction [protein]-peptidylproline (omega=180) = [protein]-peptidylproline (omega=0). In terms of biological role, PPIases accelerate the folding of proteins. It catalyzes the cis-trans isomerization of proline imidic peptide bonds in oligopeptides. The polypeptide is Peptidyl-prolyl cis-trans isomerase FKBP20-1 (FKBP20-1) (Arabidopsis thaliana (Mouse-ear cress)).